Here is a 72-residue protein sequence, read N- to C-terminus: Brevinin-2GHc (72 aa).

The signal sequence occupies residues 1–22; that stretch reads MFTMKKSLLLLFFLGMISLSLC. Positions 23–42 are excised as a propeptide; it reads EQERGADEDEGEVEEQIKRS. A disulfide bond links cysteine 64 and cysteine 70.

As to expression, expressed by the skin glands.

Its subcellular location is the secreted. Its function is as follows. Antimicrobial peptide. Active against the Gram-positive bacteria S.aureus FDA209P (MIC=9.8 ug/ml) and B.subtilis ATCC 6633 (MIC&gt;64 ug/ml), and the Gram-negative bacteria E.coli O111 (MIC=19.6 ug/ml) and E.coli ATCC 25922 (MIC=9.8 ug/ml). Not active against the fungus C.albicans. The protein is Brevinin-2GHc of Sylvirana guentheri (Gunther's frog).